The following is a 215-amino-acid chain: MGKVYDWFEERLEIQAIADDITSKYVPPHVNIFYCLGGITLTCFLVQVATGFAMTFYYRPTVTEAFASVQYIMTEVNFGWLIRSVHRWSASMMVLMMILHVFRVYLTGGFKKPRELTWVTGVILAVLTVSFGVTGYSSPWDQIGYWAVKIVTGVPEAIPVVGSPLVELSRGSVSVGQSTLTRFYSLHTFVSPLLTAVFMLMHFLMIRKQGISGPL.

Residues 32–52 (IFYCLGGITLTCFLVQVATGF) form a helical membrane-spanning segment. Residue cysteine 35 coordinates heme c. The heme b site is built by histidine 86 and histidine 100. The next 3 helical transmembrane spans lie at 90–110 (ASMM…TGGF), 116–136 (LTWV…VTGY), and 186–206 (LHTF…FLMI). The heme b site is built by histidine 187 and histidine 202.

Belongs to the cytochrome b family. PetB subfamily. The 4 large subunits of the cytochrome b6-f complex are cytochrome b6, subunit IV (17 kDa polypeptide, PetD), cytochrome f and the Rieske protein, while the 4 small subunits are PetG, PetL, PetM and PetN. The complex functions as a dimer. Heme b serves as cofactor. Requires heme c as cofactor.

Its subcellular location is the plastid. It is found in the chloroplast thylakoid membrane. In terms of biological role, component of the cytochrome b6-f complex, which mediates electron transfer between photosystem II (PSII) and photosystem I (PSI), cyclic electron flow around PSI, and state transitions. The polypeptide is Cytochrome b6 (Huperzia lucidula (Shining clubmoss)).